The chain runs to 462 residues: ATP synthase subunit beta (462 aa).

151–158 (GGAGVGKT) is an ATP binding site.

Belongs to the ATPase alpha/beta chains family. F-type ATPases have 2 components, CF(1) - the catalytic core - and CF(0) - the membrane proton channel. CF(1) has five subunits: alpha(3), beta(3), gamma(1), delta(1), epsilon(1). CF(0) has four main subunits: a(1), b(1), b'(1) and c(9-12).

The protein resides in the cell inner membrane. It carries out the reaction ATP + H2O + 4 H(+)(in) = ADP + phosphate + 5 H(+)(out). Functionally, produces ATP from ADP in the presence of a proton gradient across the membrane. The catalytic sites are hosted primarily by the beta subunits. The polypeptide is ATP synthase subunit beta (Chlorobium phaeovibrioides (strain DSM 265 / 1930) (Prosthecochloris vibrioformis (strain DSM 265))).